A 364-amino-acid chain; its full sequence is Dual-specificity RNA methyltransferase RlmN (364 aa).

The Proton acceptor role is filled by E91. The region spanning 102–337 is the Radical SAM core domain; that stretch reads GTLRITQCLS…AIIRKSKGQD (236 aa). Residues C109 and C342 are joined by a disulfide bond. [4Fe-4S] cluster-binding residues include C116, C120, and C123. S-adenosyl-L-methionine-binding positions include 169–170, S201, 223–225, and N299; these read GE and SLH. The active-site S-methylcysteine intermediate is C342.

It belongs to the radical SAM superfamily. RlmN family. It depends on [4Fe-4S] cluster as a cofactor.

It localises to the cytoplasm. The enzyme catalyses adenosine(2503) in 23S rRNA + 2 reduced [2Fe-2S]-[ferredoxin] + 2 S-adenosyl-L-methionine = 2-methyladenosine(2503) in 23S rRNA + 5'-deoxyadenosine + L-methionine + 2 oxidized [2Fe-2S]-[ferredoxin] + S-adenosyl-L-homocysteine. The catalysed reaction is adenosine(37) in tRNA + 2 reduced [2Fe-2S]-[ferredoxin] + 2 S-adenosyl-L-methionine = 2-methyladenosine(37) in tRNA + 5'-deoxyadenosine + L-methionine + 2 oxidized [2Fe-2S]-[ferredoxin] + S-adenosyl-L-homocysteine. Functionally, specifically methylates position 2 of adenine 2503 in 23S rRNA and position 2 of adenine 37 in tRNAs. m2A2503 modification seems to play a crucial role in the proofreading step occurring at the peptidyl transferase center and thus would serve to optimize ribosomal fidelity. This chain is Dual-specificity RNA methyltransferase RlmN, found in Nitratidesulfovibrio vulgaris (strain ATCC 29579 / DSM 644 / CCUG 34227 / NCIMB 8303 / VKM B-1760 / Hildenborough) (Desulfovibrio vulgaris).